A 260-amino-acid chain; its full sequence is Snake venom serine protease homolog KN7 (260 aa).

The N-terminal stretch at 1-18 (MVLIRVLANLLILQLSYA) is a signal peptide. The propeptide occupies 19-24 (QKSSEL). Positions 25-251 (IIGGDECNIN…HLDWIKSIIA (227 aa)) constitute a Peptidase S1 domain. 6 cysteine pairs are disulfide-bonded: C31–C165, C52–C68, C100–C258, C144–C212, C176–C191, and C202–C227. 3 N-linked (GlcNAc...) asparagine glycosylation sites follow: N83, N123, and N124.

Belongs to the peptidase S1 family. Snake venom subfamily. Expressed by the venom gland.

Its subcellular location is the secreted. In terms of biological role, snake venom serine protease homolog that may act in the hemostasis system of the prey. This is Snake venom serine protease homolog KN7 from Trimeresurus stejnegeri (Chinese green tree viper).